Here is a 258-residue protein sequence, read N- to C-terminus: Trans-aconitate 2-methyltransferase (258 aa).

This sequence belongs to the methyltransferase superfamily. Tam family.

The protein resides in the cytoplasm. The catalysed reaction is trans-aconitate + S-adenosyl-L-methionine = (E)-3-(methoxycarbonyl)pent-2-enedioate + S-adenosyl-L-homocysteine. Functionally, catalyzes the S-adenosylmethionine monomethyl esterification of trans-aconitate. The chain is Trans-aconitate 2-methyltransferase from Yersinia pestis bv. Antiqua (strain Antiqua).